Here is a 154-residue protein sequence, read N- to C-terminus: Transcriptional repressor NrdR (154 aa).

A zinc finger spans residues 3-34 (CPFCSHNDSKVIDSRPTDEGQAIRRRRECISC). In terms of domain architecture, ATP-cone spans 49 to 139 (LIVVKKNGNR…VYREFKDINT (91 aa)).

This sequence belongs to the NrdR family. It depends on Zn(2+) as a cofactor.

Functionally, negatively regulates transcription of bacterial ribonucleotide reductase nrd genes and operons by binding to NrdR-boxes. The polypeptide is Transcriptional repressor NrdR (Alkaliphilus oremlandii (strain OhILAs) (Clostridium oremlandii (strain OhILAs))).